The chain runs to 345 residues: Adenine deaminase (345 aa).

Residues His20, His22, and His204 each coordinate Zn(2+). The Proton donor role is filled by Glu207. Residue Asp285 coordinates Zn(2+). Asp286 contributes to the substrate binding site.

The protein belongs to the metallo-dependent hydrolases superfamily. Adenosine and AMP deaminases family. Adenine deaminase type 2 subfamily. Zn(2+) serves as cofactor.

The catalysed reaction is adenine + H2O + H(+) = hypoxanthine + NH4(+). Its function is as follows. Catalyzes the hydrolytic deamination of adenine to hypoxanthine. Plays an important role in the purine salvage pathway and in nitrogen catabolism. The sequence is that of Adenine deaminase from Ralstonia nicotianae (strain ATCC BAA-1114 / GMI1000) (Ralstonia solanacearum).